Reading from the N-terminus, the 73-residue chain is Antitoxin VapB20 (73 aa).

In terms of biological role, antitoxin component of a type II toxin-antitoxin (TA) system. Upon expression in E.coli neutralizes the toxic effect of cognate toxin VapC20. This is Antitoxin VapB20 (vapB20) from Mycobacterium tuberculosis (strain ATCC 25618 / H37Rv).